Consider the following 164-residue polypeptide: Transcriptional repressor NrdR (164 aa).

Residues 3 to 34 (CPKCNYNKSSVVDSRQAEDGNTIRRRRECESC) fold into a zinc finger. The ATP-cone domain occupies 49 to 139 (LLVIKKDGTR…VYKSFKDLDE (91 aa)).

It belongs to the NrdR family. Zn(2+) serves as cofactor.

Its function is as follows. Negatively regulates transcription of bacterial ribonucleotide reductase nrd genes and operons by binding to NrdR-boxes. This is Transcriptional repressor NrdR from Streptococcus equi subsp. zooepidemicus (strain H70).